Reading from the N-terminus, the 110-residue chain is UPF0060 membrane protein PFL_4337 (110 aa).

Transmembrane regions (helical) follow at residues 5 to 25 (LWFF…WMWL), 31 to 51 (ALWV…LTKV), 59 to 79 (AYAA…AVVE), and 84 to 104 (LGSD…ILFG).

The protein belongs to the UPF0060 family.

It is found in the cell inner membrane. The protein is UPF0060 membrane protein PFL_4337 of Pseudomonas fluorescens (strain ATCC BAA-477 / NRRL B-23932 / Pf-5).